The following is a 383-amino-acid chain: Deoxyguanosinetriphosphate triphosphohydrolase-like protein (383 aa).

The HD domain maps to 62-198 (RLTHSLEVST…AALADDISYI (137 aa)).

It belongs to the dGTPase family. Type 2 subfamily.

This Rickettsia felis (strain ATCC VR-1525 / URRWXCal2) (Rickettsia azadi) protein is Deoxyguanosinetriphosphate triphosphohydrolase-like protein.